Consider the following 92-residue polypeptide: Small nuclear ribonucleoprotein E (92 aa).

Residues 18-92 enclose the Sm domain; the sequence is INLIFRYLQN…NITLLQSVSN (75 aa).

It belongs to the snRNP Sm proteins family. As to quaternary structure, core component of the spliceosomal U1, U2, U4 and U5 small nuclear ribonucleoproteins (snRNPs), the building blocks of the spliceosome. Most spliceosomal snRNPs contain a common set of Sm proteins, snrpb, snrpd1, snrpd2, snrpd3, snrpe, snrpf and snrpg that assemble in a heptameric protein ring on the Sm site of the small nuclear RNA to form the core snRNP. Component of the U1 snRNP. The U1 snRNP is composed of the U1 snRNA and the 7 core Sm proteins snrpb, snrpd1, snrpd2, snrpd3, snrpe, snrpf and snrpg, and at least three U1 snRNP-specific proteins snrnp70/u1-70k, snrpa/u1-a and snrpc/u1-c. Component of the U4/U6-U5 tri-snRNP complex composed of the U4, U6 and U5 snRNAs and at least prpf3, prpf4, prpf6, prpf8, prpf31, snrnp200, txnl4a, snrnp40, snrpb, snrpd1, snrpd2, snrpd3, snrpe, snrpf, snrpg, ddx23, cd2bp2, ppih, snu13, eftud2, sart1 and usp39, plus lsm2, lsm3, lsm4, lsm5, lsm6, lsm7 and lsm8. Component of the U7 snRNP complex, or U7 Sm protein core complex, that is composed of the U7 snRNA and at least lsm10, lsm11, snrpb, snrpd3, snrpe, snrpf and snrpg; the complex does not contain snrpd1 and snrpd2. Component of the minor spliceosome, which splices U12-type introns. Part of the SMN-Sm complex that contains smn1, gemin2/sip1, ddx20/gemin3, gemin4, gemin5, gemin6, gemin7, gemin8, strap/unrip and the Sm proteins snrpb, snrpd1, snrpd2, snrpd3, snrpe, snrpf and snrpg; catalyzes core snRNPs assembly. Forms a 6S pICln-Sm complex composed of clns1a/pICln, snrpd1, snrpd2, snrpe, snrpf and snrpg; ring-like structure where clns1a/pICln mimics additional Sm proteins and which is unable to assemble into the core snRNP.

It localises to the cytoplasm. It is found in the cytosol. Its subcellular location is the nucleus. Functionally, plays a role in pre-mRNA splicing as a core component of the spliceosomal U1, U2, U4 and U5 small nuclear ribonucleoproteins (snRNPs), the building blocks of the spliceosome. Component of both the pre-catalytic spliceosome B complex and activated spliceosome C complexes. As a component of the minor spliceosome, involved in the splicing of U12-type introns in pre-mRNAs. As part of the U7 snRNP it is involved in histone 3'-end processing. The polypeptide is Small nuclear ribonucleoprotein E (snrpe) (Danio rerio (Zebrafish)).